The sequence spans 782 residues: Protein phosphatase 1 regulatory subunit 12C (782 aa).

Low complexity predominate over residues 1-17; sequence MSGEDGPAAGPGAAAAA. The tract at residues 1–43 is disordered; sequence MSGEDGPAAGPGAAAAAARERRREQLRQWGARAGAEPGPGERR. Serine 2 carries the N-acetylserine modification. ANK repeat units follow at residues 100-129, 133-162, 226-255, and 259-288; these read DGIS…TVNQ, EGWT…NIAA, TGAS…DPEL, and DGWT…GMDS. The stretch at 297-329 forms a coiled coil; the sequence is CDLADEEVLSLLEELARKQEDLRNQKEASQSRG. The segment at 316 to 686 is disordered; the sequence is EDLRNQKEAS…EEPDGGFRTL (371 aa). The segment covering 323–337 has biased composition (polar residues); sequence EASQSRGQEPQAPSS. Basic and acidic residues predominate over residues 349–365; it reads SSREKISLQDLSKERRP. Residues 374–383 are compositionally biased toward acidic residues; the sequence is QDEDEGEEGP. A phosphoserine mark is found at serine 399, serine 407, serine 427, serine 452, and serine 509. The span at 449–463 shows a compositional bias: polar residues; sequence RSASSSWLEGTSTQA. Residues 537-546 show a composition bias toward basic and acidic residues; sequence VRDEESESQR. The segment covering 547–557 has biased composition (basic residues); the sequence is KARSRLMRQSR. Threonine 560 is modified (phosphothreonine; by CDC42BP and ROCK2). Positions 567–583 are enriched in basic and acidic residues; the sequence is DLKEAEKAAGKAPESEK. Phosphoserine occurs at positions 604 and 647. The span at 670-680 shows a compositional bias: acidic residues; sequence PEPEPESEEPD. Positions 681–782 form a coiled coil; that stretch reads GGFRTLYAEL…LIRVISKLSK (102 aa).

As to quaternary structure, PP1 comprises a catalytic subunit, PPP1CA, PPP1CB or PPP1CC, and one or several targeting or regulatory subunits. PPP1R12C mediates binding to myosin. Interacts via its N-terminus with PPP1CB. Interacts with IL16. Interacts with the coiled-coil domain of MPRIP. Interacts with NOD2. Phosphorylation at Thr-560 is essential for its interaction with PPP1CB. In terms of tissue distribution, ubiquitously expressed. Highly expressed in heart.

It localises to the cytoplasm. Its subcellular location is the cytoskeleton. The protein localises to the stress fiber. In terms of biological role, regulates myosin phosphatase activity. The chain is Protein phosphatase 1 regulatory subunit 12C from Homo sapiens (Human).